The chain runs to 178 residues: Ribonuclease M5 (178 aa).

Residues 4 to 100 (NEFIVVEGRD…KIGVEHADLI (97 aa)) enclose the Toprim domain. E10, D56, and D58 together coordinate Mg(2+).

It belongs to the ribonuclease M5 family. Requires Mg(2+) as cofactor.

The protein localises to the cytoplasm. The catalysed reaction is Endonucleolytic cleavage of RNA, removing 21 and 42 nucleotides, respectively, from the 5'- and 3'-termini of a 5S-rRNA precursor.. Functionally, required for correct processing of both the 5' and 3' ends of 5S rRNA precursor. Cleaves both sides of a double-stranded region yielding mature 5S rRNA in one step. The polypeptide is Ribonuclease M5 (Staphylococcus aureus (strain NCTC 8325 / PS 47)).